The sequence spans 556 residues: (-)-alpha-pinene synthase (556 aa).

Positions 309, 313, 453, and 461 each coordinate Mg(2+). The DDXXD motif signature appears at 309 to 313; that stretch reads DDMYD.

It belongs to the terpene synthase family. Tpsa subfamily. Mg(2+) is required as a cofactor. It depends on Mn(2+) as a cofactor. Expressed in ripe fruits and roots. Not detected in vegetative tissues.

The protein localises to the cytoplasm. The protein resides in the cytosol. The catalysed reaction is (2E)-geranyl diphosphate = (1S,5S)-alpha-pinene + diphosphate. The protein operates within secondary metabolite biosynthesis; terpenoid biosynthesis. In terms of biological role, monoterpene synthase catalyzing the production of (-)-alpha-pinene, beta-phellandrene and beta-myrcene as the major products. Unable to use farnesyl diphosphate as substrate. Exclusively expressed in the fruit of wild strawberries. Not detected in cultivated varieties. This chain is (-)-alpha-pinene synthase, found in Fragaria vesca (Woodland strawberry).